A 214-amino-acid chain; its full sequence is Thiamine-phosphate synthase (214 aa).

4-amino-2-methyl-5-(diphosphooxymethyl)pyrimidine contacts are provided by residues 37–41 (QYREK) and Asn-73. Residues Asp-74 and Asp-93 each contribute to the Mg(2+) site. Position 112 (Ser-112) interacts with 4-amino-2-methyl-5-(diphosphooxymethyl)pyrimidine. 2-[(2R,5Z)-2-carboxy-4-methylthiazol-5(2H)-ylidene]ethyl phosphate is bound at residue 139–141 (TIS). Lys-142 lines the 4-amino-2-methyl-5-(diphosphooxymethyl)pyrimidine pocket. Residues Gly-171 and 191 to 192 (IS) contribute to the 2-[(2R,5Z)-2-carboxy-4-methylthiazol-5(2H)-ylidene]ethyl phosphate site.

It belongs to the thiamine-phosphate synthase family. It depends on Mg(2+) as a cofactor.

It catalyses the reaction 2-[(2R,5Z)-2-carboxy-4-methylthiazol-5(2H)-ylidene]ethyl phosphate + 4-amino-2-methyl-5-(diphosphooxymethyl)pyrimidine + 2 H(+) = thiamine phosphate + CO2 + diphosphate. It carries out the reaction 2-(2-carboxy-4-methylthiazol-5-yl)ethyl phosphate + 4-amino-2-methyl-5-(diphosphooxymethyl)pyrimidine + 2 H(+) = thiamine phosphate + CO2 + diphosphate. The catalysed reaction is 4-methyl-5-(2-phosphooxyethyl)-thiazole + 4-amino-2-methyl-5-(diphosphooxymethyl)pyrimidine + H(+) = thiamine phosphate + diphosphate. It functions in the pathway cofactor biosynthesis; thiamine diphosphate biosynthesis; thiamine phosphate from 4-amino-2-methyl-5-diphosphomethylpyrimidine and 4-methyl-5-(2-phosphoethyl)-thiazole: step 1/1. In terms of biological role, condenses 4-methyl-5-(beta-hydroxyethyl)thiazole monophosphate (THZ-P) and 2-methyl-4-amino-5-hydroxymethyl pyrimidine pyrophosphate (HMP-PP) to form thiamine monophosphate (TMP). This chain is Thiamine-phosphate synthase, found in Listeria monocytogenes serotype 4b (strain CLIP80459).